The following is a 115-amino-acid chain: Virion-associated protein (115 aa).

Coiled coils occupy residues 1 to 28 (MAATLSEIRELIQSLTKTANEIKAMLER) and 33 to 54 (KPTGIEEAAAKIIKDIGDKIDQ). A compositionally biased stretch (polar residues) spans 96 to 106 (GNEELGSSGNP). The disordered stretch occupies residues 96–115 (GNEELGSSGNPNAVKWPPRK).

Belongs to the caulimovirus ORF III family. As to quaternary structure, homotetramer, through coiled-coil domain. Homotrimer when interacts with icosehadral capsid. Interacts with capsid protein, and with Movement protein.

Its subcellular location is the virion. The protein localises to the host cell junction. It is found in the host plasmodesma. Functionally, plays a role in virus cell-to-cell and plant-to-plant transmission. Interacts with virion icosahedral capsid and movement protein, thereby facilitating virion cell-to-cell transmission through plasmodesmata opened by viral movement protein. Also interacts with aphid transmission factor, attaching the virion to aphid stylet when the animal feeds on an virus infected plant. Aphid saliva may later detach the virion, inducing release of infectious particles when the animal feeds on a new plant. The polypeptide is Virion-associated protein (Scrophularia californica (California bee plant)).